The primary structure comprises 299 residues: Transcription factor MYB17 (299 aa).

HTH myb-type domains lie at Lys-9–Leu-61 and Arg-62–Leu-116. 2 DNA-binding regions (H-T-H motif) span residues Trp-37–Leu-61 and Trp-89–Leu-112.

In terms of assembly, interacts with LFY. In terms of tissue distribution, expressed in the shoot apex, young flower buds, developing carpels and siliques. Expressed in floral meristem, initiating floral primordia and developing flowers.

The protein resides in the nucleus. Functionally, transcription factor that may play a role in flower development by repressing ANT. Regulates the transition of meristem identity from vegetative growth to flowering. Acts downstream of LFY and upstream of AP1. Directly activates AP1 to promote floral fate. Together with LFY and AP1 may constitute a regulatory network that contributes to an abrupt and robust meristem identity transition. This is Transcription factor MYB17 from Arabidopsis thaliana (Mouse-ear cress).